The following is a 177-amino-acid chain: Co-chaperone protein HscB homolog (177 aa).

The J domain maps to 8-80; it reads DYFSLFGMPR…LSRAQYLLEL (73 aa).

The protein belongs to the HscB family. In terms of assembly, interacts with HscA and stimulates its ATPase activity.

Functionally, co-chaperone involved in the maturation of iron-sulfur cluster-containing proteins. Seems to help targeting proteins to be folded toward HscA. The sequence is that of Co-chaperone protein HscB homolog from Azoarcus sp. (strain BH72).